The chain runs to 616 residues: Chaperone protein DnaK (616 aa).

Threonine 174 is subject to Phosphothreonine; by autocatalysis. A disordered region spans residues glutamine 575–lysine 616. Residues alanine 607 to lysine 616 show a composition bias toward basic and acidic residues.

The protein belongs to the heat shock protein 70 family.

Functionally, acts as a chaperone. The protein is Chaperone protein DnaK of Ruminiclostridium cellulolyticum (strain ATCC 35319 / DSM 5812 / JCM 6584 / H10) (Clostridium cellulolyticum).